A 121-amino-acid chain; its full sequence is Large ribosomal subunit protein bL12 (121 aa).

It belongs to the bacterial ribosomal protein bL12 family. Homodimer. Part of the ribosomal stalk of the 50S ribosomal subunit. Forms a multimeric L10(L12)X complex, where L10 forms an elongated spine to which 2 to 4 L12 dimers bind in a sequential fashion. Binds GTP-bound translation factors.

Its function is as follows. Forms part of the ribosomal stalk which helps the ribosome interact with GTP-bound translation factors. Is thus essential for accurate translation. The protein is Large ribosomal subunit protein bL12 of Clostridium beijerinckii (strain ATCC 51743 / NCIMB 8052) (Clostridium acetobutylicum).